The primary structure comprises 312 residues: Apolipoprotein E (312 aa).

An N-terminal signal peptide occupies residues M1–A18. Tandem repeats lie at residues V72–G93, P94–G115, A116–G137, Q138–M159, R160–E181, R182–A203, N204–R225, and G226–E247. Residues V72 to E247 are 8 X 22 AA approximate tandem repeats. Residue M135 is modified to Methionine sulfoxide. A Phosphoserine modification is found at S139. The LDL and other lipoprotein receptors binding stretch occupies residues H150 to R160. Positions H150–R160 are LDL receptor binding. M154 to R157 contributes to the heparin binding site. A lipid-binding and lipoprotein association region spans residues T202–M282. S221–L228 lines the heparin pocket. The interval Q258–Q312 is homooligomerization. Residues R270–M282 form a specificity for association with VLDL region.

This sequence belongs to the apolipoprotein A1/A4/E family. Homotetramer. May interact with ABCA1; functionally associated with ABCA1 in the biogenesis of HDLs. May interact with APP/A4 amyloid-beta peptide; the interaction is extremely stable in vitro but its physiological significance is unclear. May interact with MAPT. May interact with MAP2. In the cerebrospinal fluid, interacts with secreted SORL1. Interacts with PMEL; this allows the loading of PMEL luminal fragment on ILVs to induce fibril nucleation. In terms of processing, APOE exists as multiple glycosylated and sialylated glycoforms within cells and in plasma. The extent of glycosylation and sialylation are tissue and context specific. Post-translationally, glycated in plasma VLDL. Phosphorylated by FAM20C in the extracellular medium.

The protein resides in the secreted. It is found in the extracellular space. Its subcellular location is the extracellular matrix. It localises to the extracellular vesicle. The protein localises to the endosome. The protein resides in the multivesicular body. Its function is as follows. APOE is an apolipoprotein, a protein associating with lipid particles, that mainly functions in lipoprotein-mediated lipid transport between organs via the plasma and interstitial fluids. APOE is a core component of plasma lipoproteins and is involved in their production, conversion and clearance. Apolipoproteins are amphipathic molecules that interact both with lipids of the lipoprotein particle core and the aqueous environment of the plasma. As such, APOE associates with chylomicrons, chylomicron remnants, very low density lipoproteins (VLDL) and intermediate density lipoproteins (IDL) but shows a preferential binding to high-density lipoproteins (HDL). It also binds a wide range of cellular receptors including the LDL receptor/LDLR and the very low-density lipoprotein receptor/VLDLR that mediate the cellular uptake of the APOE-containing lipoprotein particles. Finally, APOE also has a heparin-binding activity and binds heparan-sulfate proteoglycans on the surface of cells, a property that supports the capture and the receptor-mediated uptake of APOE-containing lipoproteins by cells. This Rattus norvegicus (Rat) protein is Apolipoprotein E (Apoe).